A 489-amino-acid chain; its full sequence is Cysteine--tRNA ligase (489 aa).

Position 29 (C29) interacts with Zn(2+). A 'HIGH' region motif is present at residues 31–41 (ITSYDYCHIGH). Zn(2+) contacts are provided by C209, H234, and E238. A 'KMSKS' region motif is present at residues 266–270 (KMSKS). K269 contributes to the ATP binding site.

This sequence belongs to the class-I aminoacyl-tRNA synthetase family. As to quaternary structure, monomer. The cofactor is Zn(2+).

The protein resides in the cytoplasm. The enzyme catalyses tRNA(Cys) + L-cysteine + ATP = L-cysteinyl-tRNA(Cys) + AMP + diphosphate. This Desulfotalea psychrophila (strain LSv54 / DSM 12343) protein is Cysteine--tRNA ligase.